The chain runs to 339 residues: Paired box protein Pax-9 (339 aa).

A DNA-binding region (paired) is located at residues 2–128 (AFGEVNQLGG…SSISRILRNK (127 aa)). The segment at 5–61 (EVNQLGGVFVNGRPLPNAIRLRIVELAQLGIRPCDISRQLRVSHGCVSKILARYNET) is PAI subdomain. The tract at residues 80 to 128 (TVVKHIRTYKQRDPGIFAWEIRDRLLADGVCDKYNVPSVSSISRILRNK) is RED subdomain.

The protein resides in the nucleus. The sequence is that of Paired box protein Pax-9 (PAX9) from Gallus gallus (Chicken).